We begin with the raw amino-acid sequence, 3381 residues long: Versican core protein (3381 aa).

The N-terminal stretch at Met-1–Ala-20 is a signal peptide. One can recognise an Ig-like V-type domain in the interval Leu-21–Thr-147. Cystine bridges form between Cys-44-Cys-131, Cys-173-Cys-244, Cys-197-Cys-218, Cys-271-Cys-346, and Cys-295-Cys-316. Asn-57 is a glycosylation site (N-linked (GlcNAc...) asparagine). 2 consecutive Link domains span residues Val-151–Val-246 and Asp-252–Lys-348. Residues Asn-331 and Asn-352 are each glycosylated (N-linked (GlcNAc...) asparagine). Residues Pro-349 to Gly-1336 are GAG-alpha (glucosaminoglycan attachment domain). Positions Pro-417–Glu-427 are enriched in polar residues. Disordered stretches follow at residues Pro-417–Lys-437 and Glu-603–Arg-623. A glycan (O-linked (Xyl...) (chondroitin sulfate) serine) is linked at Ser-660. Residues Asp-816–Pro-866 are disordered. An N-linked (GlcNAc...) asparagine glycan is attached at Asn-817. The span at Gly-846–Thr-863 shows a compositional bias: basic and acidic residues. N-linked (GlcNAc...) asparagine glycans are attached at residues Asn-965 and Asn-1017. Basic and acidic residues predominate over residues Glu-1043 to Pro-1052. Disordered stretches follow at residues Glu-1043 to Ser-1081 and Phe-1218 to Glu-1244. Asn-1333 is a glycosylation site (N-linked (GlcNAc...) asparagine). The GAG-beta stretch occupies residues Arg-1337–Gly-3074. The tract at residues Met-1338–Thr-1362 is disordered. The span at Ser-1352–Thr-1362 shows a compositional bias: acidic residues. Asn-1393 carries N-linked (GlcNAc...) asparagine glycosylation. Basic and acidic residues predominate over residues Lys-1417–Gln-1428. Disordered regions lie at residues Lys-1417–Ser-1446, Gly-1455–Ile-1474, and Thr-1484–Ser-1512. N-linked (GlcNAc...) asparagine glycans are attached at residues Asn-1437 and Asn-1463. O-linked (Xyl...) (chondroitin sulfate) serine glycosylation is found at Ser-1539 and Ser-1621. Residue Asn-1653 is glycosylated (N-linked (GlcNAc...) asparagine). The segment at Pro-1708–Val-1785 is disordered. A compositionally biased stretch (basic and acidic residues) spans Glu-1712–Gly-1721. Residues Ala-1726–Leu-1738 are compositionally biased toward polar residues. Residues Ser-1743–Ala-1761 are compositionally biased toward low complexity. Polar residues predominate over residues Lys-1764–Val-1784. 2 O-linked (Xyl...) (chondroitin sulfate) serine glycosylation sites follow: Ser-1928 and Ser-1952. Residues Pro-1964–Thr-1976 are compositionally biased toward polar residues. 2 disordered regions span residues Pro-1964–Leu-1986 and Glu-2041–Val-2126. 4 N-linked (GlcNAc...) asparagine glycosylation sites follow: Asn-1974, Asn-2045, Asn-2074, and Asn-2103. The span at Ser-2065–His-2075 shows a compositional bias: basic and acidic residues. Ser-2109 carries the phosphoserine modification. O-linked (Xyl...) (chondroitin sulfate) serine glycosylation is found at Ser-2240 and Ser-2247. 3 N-linked (GlcNAc...) asparagine glycosylation sites follow: Asn-2263, Asn-2290, and Asn-2356. 3 disordered regions span residues Glu-2338–Lys-2388, Glu-2490–Thr-2512, and Thr-2594–Gln-2615. Polar residues-rich tracts occupy residues Leu-2345–Gln-2357 and Thr-2367–Val-2383. Phosphoserine is present on residues Ser-2607 and Ser-2608. The residue at position 2612 (Thr-2612) is a Phosphothreonine. N-linked (GlcNAc...) asparagine glycosylation is found at Asn-2623 and Asn-2641. Residues Ser-2714, Ser-2715, and Ser-2759 are each glycosylated (O-linked (Xyl...) (chondroitin sulfate) serine). Residues Pro-2819–Lys-2893 form a disordered region. Over residues Ala-2840–Val-2851 the composition is skewed to polar residues. N-linked (GlcNAc...) asparagine glycosylation is found at Asn-2919 and Asn-3052. The EGF-like 1 domain occupies Gly-3074–Glu-3110. Disulfide bonds link Cys-3078–Cys-3089, Cys-3083–Cys-3098, Cys-3100–Cys-3109, Cys-3116–Cys-3127, Cys-3121–Cys-3136, Cys-3138–Cys-3147, Cys-3154–Cys-3165, Cys-3182–Cys-3274, Cys-3250–Cys-3266, Cys-3281–Cys-3324, and Cys-3310–Cys-3337. In terms of domain architecture, EGF-like 2; calcium-binding spans Asp-3112–Glu-3148. Residues Phe-3161–Lys-3275 enclose the C-type lectin domain. The Sushi domain occupies Val-3279 to Asn-3339. Residues Asn-3354 and Asn-3364 are each glycosylated (N-linked (GlcNAc...) asparagine). Residues Ser-3355 to Thr-3365 are compositionally biased toward polar residues. A disordered region spans residues Ser-3355–Arg-3381.

It belongs to the aggrecan/versican proteoglycan family. In terms of assembly, interacts with FBLN1. Phosphorylated by FAM20C in the extracellular medium. In terms of processing, proteolytically cleaved by ADAMTS5 and ADAMTS15 in the pericellular matrix surrounding myoblasts, facilitating myoblast contact and fusion which is required for skeletal muscle development and regeneration. As to expression, cerebral white matter. Isoform V0 and isoform V1 are expressed in the central nervous system, and in a number of mesenchymal and epithelial tissues; the major isoform V2 is restricted to the central nervous system.

The protein resides in the secreted. It localises to the extracellular space. Its subcellular location is the extracellular matrix. It is found in the cell projection. The protein localises to the cilium. The protein resides in the photoreceptor outer segment. It localises to the interphotoreceptor matrix. In terms of biological role, may play a role in intercellular signaling and in connecting cells with the extracellular matrix. May take part in the regulation of cell motility, growth and differentiation. Binds hyaluronic acid. In Bos taurus (Bovine), this protein is Versican core protein (VCAN).